A 280-amino-acid polypeptide reads, in one-letter code: Large ribosomal subunit protein uL2 (280 aa).

Disordered regions lie at residues 1–59 (MAIR…GGHK) and 223–280 (GVVM…NKKR). A compositionally biased stretch (basic and acidic residues) spans 23 to 33 (ELTRSTPEKSL). 2 stretches are compositionally biased toward basic residues: residues 36 to 59 (PLHK…GGHK) and 269 to 280 (VRRRRSNKNKKR).

This sequence belongs to the universal ribosomal protein uL2 family. Part of the 50S ribosomal subunit. Forms a bridge to the 30S subunit in the 70S ribosome.

In terms of biological role, one of the primary rRNA binding proteins. Required for association of the 30S and 50S subunits to form the 70S ribosome, for tRNA binding and peptide bond formation. It has been suggested to have peptidyltransferase activity; this is somewhat controversial. Makes several contacts with the 16S rRNA in the 70S ribosome. The chain is Large ribosomal subunit protein uL2 from Corynebacterium kroppenstedtii (strain DSM 44385 / JCM 11950 / CIP 105744 / CCUG 35717).